Consider the following 166-residue polypeptide: Phosphopantetheine adenylyltransferase (166 aa).

Ser11 provides a ligand contact to substrate. ATP-binding positions include 11–12 and His19; that span reads SF. Substrate is bound by residues Lys43, Ala76, and Arg90. ATP contacts are provided by residues 91 to 93, Glu101, and 126 to 132; these read GLR and LQPVSSS.

The protein belongs to the bacterial CoaD family. Homohexamer. Mg(2+) serves as cofactor.

The protein localises to the cytoplasm. It catalyses the reaction (R)-4'-phosphopantetheine + ATP + H(+) = 3'-dephospho-CoA + diphosphate. It functions in the pathway cofactor biosynthesis; coenzyme A biosynthesis; CoA from (R)-pantothenate: step 4/5. Reversibly transfers an adenylyl group from ATP to 4'-phosphopantetheine, yielding dephospho-CoA (dPCoA) and pyrophosphate. The protein is Phosphopantetheine adenylyltransferase of Streptococcus equi subsp. equi (strain 4047).